A 675-amino-acid polypeptide reads, in one-letter code: Methionine--tRNA ligase (675 aa).

A 'HIGH' region motif is present at residues 15 to 25 (PYANGSIHLGH). Zn(2+) contacts are provided by Cys-146, Cys-149, Cys-159, and Cys-162. The 'KMSKS' region signature appears at 332–336 (KMSKS). Lys-335 is an ATP binding site. Residues 573–675 (DFAKVDMRIA…SGAQPGMQVK (103 aa)) form the tRNA-binding domain.

It belongs to the class-I aminoacyl-tRNA synthetase family. MetG type 1 subfamily. In terms of assembly, homodimer. Requires Zn(2+) as cofactor.

It localises to the cytoplasm. It catalyses the reaction tRNA(Met) + L-methionine + ATP = L-methionyl-tRNA(Met) + AMP + diphosphate. Its function is as follows. Is required not only for elongation of protein synthesis but also for the initiation of all mRNA translation through initiator tRNA(fMet) aminoacylation. In Yersinia pestis bv. Antiqua (strain Angola), this protein is Methionine--tRNA ligase.